A 281-amino-acid polypeptide reads, in one-letter code: 2,3,4,5-tetrahydropyridine-2,6-dicarboxylate N-succinyltransferase (281 aa).

Positions 108 and 145 each coordinate substrate.

It belongs to the transferase hexapeptide repeat family. As to quaternary structure, homotrimer.

It localises to the cytoplasm. It carries out the reaction (S)-2,3,4,5-tetrahydrodipicolinate + succinyl-CoA + H2O = (S)-2-succinylamino-6-oxoheptanedioate + CoA. Its pathway is amino-acid biosynthesis; L-lysine biosynthesis via DAP pathway; LL-2,6-diaminopimelate from (S)-tetrahydrodipicolinate (succinylase route): step 1/3. The chain is 2,3,4,5-tetrahydropyridine-2,6-dicarboxylate N-succinyltransferase from Nitrobacter winogradskyi (strain ATCC 25391 / DSM 10237 / CIP 104748 / NCIMB 11846 / Nb-255).